The sequence spans 699 residues: Polyribonucleotide nucleotidyltransferase (699 aa).

Aspartate 485 and aspartate 491 together coordinate Mg(2+). In terms of domain architecture, KH spans 552-611 (PRITVIKINPEKIRDVIGKGGAVIRALTEETGTTIELEDDGTVKIASSNGEATKEAIRRI). Residues 621 to 689 (GRIYNGKVIR…RQGRVRLSIK (69 aa)) form the S1 motif domain.

This sequence belongs to the polyribonucleotide nucleotidyltransferase family. In terms of assembly, component of the RNA degradosome, which is a multiprotein complex involved in RNA processing and mRNA degradation. Requires Mg(2+) as cofactor.

The protein localises to the cytoplasm. The enzyme catalyses RNA(n+1) + phosphate = RNA(n) + a ribonucleoside 5'-diphosphate. Functionally, involved in mRNA degradation. Catalyzes the phosphorolysis of single-stranded polyribonucleotides processively in the 3'- to 5'-direction. In Shewanella baltica (strain OS223), this protein is Polyribonucleotide nucleotidyltransferase.